Consider the following 203-residue polypeptide: Large ribosomal subunit protein uL13 (203 aa).

Ala2 is subject to N-acetylalanine. Residue Arg59 is modified to Citrulline. Phosphoserine is present on Ser77. Position 140 is a citrulline (Arg140). At Lys191 the chain carries N6-acetyllysine.

It belongs to the universal ribosomal protein uL13 family. Component of the 60S ribosome. Component of the GAIT complex. Interacts with EIF4G1. Phosphorylation at Ser-77 upon interferon-gamma treatment in macrophages involves a DAPK1-DAPK3 kinase cascade and is causing release from the ribosome, association with the GAIT complex and subsequent involvement in transcript-selective translation inhibition. In terms of processing, citrullinated by PADI4.

The protein resides in the cytoplasm. Its function is as follows. Associated with ribosomes but is not required for canonical ribosome function and has extra-ribosomal functions. Component of the GAIT (gamma interferon-activated inhibitor of translation) complex which mediates interferon-gamma-induced transcript-selective translation inhibition in inflammation processes. Upon interferon-gamma activation and subsequent phosphorylation dissociates from the ribosome and assembles into the GAIT complex which binds to stem loop-containing GAIT elements in the 3'-UTR of diverse inflammatory mRNAs (such as ceruplasmin) and suppresses their translation. In the GAIT complex interacts with m7G cap-bound eIF4G at or near the eIF3-binding site and blocks the recruitment of the 43S ribosomal complex. Involved in methylation of rRNA. This Canis lupus familiaris (Dog) protein is Large ribosomal subunit protein uL13 (RPL13A).